We begin with the raw amino-acid sequence, 317 residues long: Melanocyte-stimulating hormone receptor (317 aa).

Residues 1–37 are Extracellular-facing; it reads MPVQGSQRRLLGSLNSTPTATPRLGLAANQTGARCLE. N-linked (GlcNAc...) asparagine glycosylation occurs at N29. The helical transmembrane segment at 38-63 threads the bilayer; sequence VSIPDGLFLSLGLVSLVENVLVVVAI. Residues 64-72 are Cytoplasmic-facing; sequence ARNRNLHSP. The helical transmembrane segment at 73–93 threads the bilayer; sequence MYCFICCLALSDLLVSGSNML. Residues 94-118 lie on the Extracellular side of the membrane; it reads ETAVFLLLEAGALAARAAVVQQLDN. The chain crosses the membrane as a helical span at residues 119–140; that stretch reads VIDVITCSSMLSSLCFLGAIAV. At 141–163 the chain is on the cytoplasmic side; sequence DRYISIFYALRYHSIVTLRRARR. A helical transmembrane segment spans residues 164–183; sequence VVAAIWVASVLFSTLFIAYC. The Extracellular portion of the chain corresponds to 184–191; sequence DHAAVLLC. Residues 192–211 form a helical membrane-spanning segment; that stretch reads LVVFFLAMLVLMAVLYVHML. At 212–240 the chain is on the cytoplasmic side; that stretch reads ARACQHAQGIAQLHKRQRPAHQGVGLKGA. The chain crosses the membrane as a helical span at residues 241-266; it reads ATLTILLGIFFLCWGPFFLHLTLIVL. Over 267-279 the chain is Extracellular; sequence CPQHPTCSCIFKN. Residues 280–300 traverse the membrane as a helical segment; the sequence is FNLFLTLIICNAIIDPLIYAF. The Cytoplasmic segment spans residues 301 to 317; the sequence is RSQELRRTLKKVLLCSW. A lipid anchor (S-palmitoyl cysteine) is attached at C315.

It belongs to the G-protein coupled receptor 1 family. In terms of assembly, interacts with MGRN1, but does not undergo MGRN1-mediated ubiquitination; this interaction competes with GNAS-binding and thus inhibits agonist-induced cAMP production. Interacts with OPN3; the interaction results in a decrease in MC1R-mediated cAMP signaling and ultimately a decrease in melanin production in melanocytes.

The protein localises to the cell membrane. Its function is as follows. Receptor for MSH (alpha, beta and gamma) and ACTH. The activity of this receptor is mediated by G proteins which activate adenylate cyclase. Mediates melanogenesis, the production of eumelanin (black/brown) and phaeomelanin (red/yellow), via regulation of cAMP signaling in melanocytes. The polypeptide is Melanocyte-stimulating hormone receptor (MC1R) (Trachypithecus obscurus (Dusky leaf-monkey)).